Consider the following 433-residue polypeptide: Pyrimidine-nucleoside phosphorylase (433 aa).

81–83 (KHS) contributes to the phosphate binding site. Gly88 and Thr90 together coordinate K(+). Residues Thr92, 108 to 110 (KMS), and Thr120 contribute to the phosphate site. Substrate-binding residues include Arg168 and Lys187. K(+) is bound by residues Leu243, Ala246, and Glu255.

Belongs to the thymidine/pyrimidine-nucleoside phosphorylase family. In terms of assembly, homodimer. It depends on K(+) as a cofactor.

The catalysed reaction is uridine + phosphate = alpha-D-ribose 1-phosphate + uracil. The enzyme catalyses thymidine + phosphate = 2-deoxy-alpha-D-ribose 1-phosphate + thymine. It carries out the reaction 2'-deoxyuridine + phosphate = 2-deoxy-alpha-D-ribose 1-phosphate + uracil. Its function is as follows. Catalyzes phosphorolysis of the pyrimidine nucleosides uridine, thymidine and 2'-deoxyuridine with the formation of the corresponding pyrimidine base and ribose-1-phosphate. This chain is Pyrimidine-nucleoside phosphorylase, found in Bacillus subtilis (strain 168).